A 311-amino-acid polypeptide reads, in one-letter code: MQNIVRTAQVVERFKLQVIAGEEGLHRPVATPDLSRPGLVLAGYYTHYAKNRLQVLGKTELTFYASLSEEKRRERAKILCTEQTPGILITRGFDIPKEIEEEAEAANVPLMRTNAVTTSIESQITNFLEMELAPMTAMHGVLVDIYGVGVLIKGQSGVGKSETALELVKRGHRLVADDSVEIRQTGDQLLVGSAPKLIRHLLEIRGIGIIDVMTLFGAGAVRSHKKISLIVNLENWDAGKVYDRVGLDHNTMKIIDSEVPLLTIPVRPGRNLAVIIEVAAMNYRLQNMGINTAEEFAERLANAIQDTEGDL.

Catalysis depends on residues H139 and K160. ATP is bound at residue 154–161; it reads GQSGVGKS. A Mg(2+)-binding site is contributed by S161. Catalysis depends on D178, which acts as the Proton acceptor; for phosphorylation activity. Proton donor; for dephosphorylation activity. The segment at 202-211 is important for the catalytic mechanism of both phosphorylation and dephosphorylation; the sequence is LEIRGIGIID. E203 serves as a coordination point for Mg(2+). Residue R244 is part of the active site. The interval 265-270 is important for the catalytic mechanism of dephosphorylation; it reads PVRPGR.

Belongs to the HPrK/P family. Homohexamer. It depends on Mg(2+) as a cofactor.

It carries out the reaction [HPr protein]-L-serine + ATP = [HPr protein]-O-phospho-L-serine + ADP + H(+). It catalyses the reaction [HPr protein]-O-phospho-L-serine + phosphate + H(+) = [HPr protein]-L-serine + diphosphate. In terms of biological role, catalyzes the ATP- as well as the pyrophosphate-dependent phosphorylation of a specific serine residue in HPr, a phosphocarrier protein of the phosphoenolpyruvate-dependent sugar phosphotransferase system (PTS). HprK/P also catalyzes the pyrophosphate-producing, inorganic phosphate-dependent dephosphorylation (phosphorolysis) of seryl-phosphorylated HPr (P-Ser-HPr). The two antagonistic activities of HprK/P are regulated by several intracellular metabolites, which change their concentration in response to the absence or presence of rapidly metabolisable carbon sources (glucose, fructose, etc.) in the growth medium. Therefore, by controlling the phosphorylation state of HPr, HPrK/P is a sensor enzyme that plays a major role in the regulation of carbon metabolism and sugar transport: it mediates carbon catabolite repression (CCR), and regulates PTS-catalyzed carbohydrate uptake and inducer exclusion. The protein is HPr kinase/phosphorylase of Exiguobacterium sp. (strain ATCC BAA-1283 / AT1b).